A 148-amino-acid polypeptide reads, in one-letter code: NTR domain-containing protein (148 aa).

The first 26 residues, 1 to 26 (MVCRFSYVQVVLILVVLSVIISWANA), serve as a signal peptide directing secretion. 3 disulfides stabilise this stretch: C27–C96, C29–C122, and C40–C146. The 120-residue stretch at 27–146 (CSCFPPDETR…LQLFNDPQWC (120 aa)) folds into the NTR domain.

In terms of tissue distribution, prismatic layer of shell (at protein level). Expressed primarily in the mantle with highest level in the mantle edge and lower level in the mantle pallium.

It is found in the secreted. The chain is NTR domain-containing protein from Margaritifera margaritifera (Freshwater pearl mussel).